The chain runs to 804 residues: Leucine--tRNA ligase (804 aa).

Positions 39 to 50 (PFPSGKGLHVGH) match the 'HIGH' region motif. A 'KMSKS' region motif is present at residues 573 to 577 (KMSKS). An ATP-binding site is contributed by Lys-576.

This sequence belongs to the class-I aminoacyl-tRNA synthetase family.

The protein resides in the cytoplasm. The catalysed reaction is tRNA(Leu) + L-leucine + ATP = L-leucyl-tRNA(Leu) + AMP + diphosphate. This chain is Leucine--tRNA ligase, found in Lactobacillus gasseri (strain ATCC 33323 / DSM 20243 / BCRC 14619 / CIP 102991 / JCM 1131 / KCTC 3163 / NCIMB 11718 / NCTC 13722 / AM63).